The primary structure comprises 630 residues: 1-deoxy-D-xylulose-5-phosphate synthase (630 aa).

Thiamine diphosphate-binding positions include histidine 72 and 113-115; that span reads GHS. Aspartate 144 is a Mg(2+) binding site. Thiamine diphosphate is bound by residues 145–146, asparagine 173, tyrosine 284, and glutamate 367; that span reads GA. Asparagine 173 provides a ligand contact to Mg(2+).

It belongs to the transketolase family. DXPS subfamily. As to quaternary structure, homodimer. Requires Mg(2+) as cofactor. Thiamine diphosphate serves as cofactor.

It carries out the reaction D-glyceraldehyde 3-phosphate + pyruvate + H(+) = 1-deoxy-D-xylulose 5-phosphate + CO2. Its pathway is metabolic intermediate biosynthesis; 1-deoxy-D-xylulose 5-phosphate biosynthesis; 1-deoxy-D-xylulose 5-phosphate from D-glyceraldehyde 3-phosphate and pyruvate: step 1/1. Catalyzes the acyloin condensation reaction between C atoms 2 and 3 of pyruvate and glyceraldehyde 3-phosphate to yield 1-deoxy-D-xylulose-5-phosphate (DXP). The chain is 1-deoxy-D-xylulose-5-phosphate synthase from Bacillus cereus (strain ATCC 10987 / NRS 248).